A 360-amino-acid polypeptide reads, in one-letter code: Alanine racemase (360 aa).

K33 serves as the catalytic Proton acceptor; specific for D-alanine. K33 carries the post-translational modification N6-(pyridoxal phosphate)lysine. Residue R129 coordinates substrate. Residue Y253 is the Proton acceptor; specific for L-alanine of the active site. M301 provides a ligand contact to substrate.

It belongs to the alanine racemase family. It depends on pyridoxal 5'-phosphate as a cofactor.

It carries out the reaction L-alanine = D-alanine. Its pathway is amino-acid biosynthesis; D-alanine biosynthesis; D-alanine from L-alanine: step 1/1. Its function is as follows. Catalyzes the interconversion of L-alanine and D-alanine. May also act on other amino acids. The polypeptide is Alanine racemase (alr) (Xanthomonas campestris pv. campestris (strain 8004)).